Reading from the N-terminus, the 237-residue chain is Chloride intracellular channel protein 3 (237 aa).

A required for insertion into the membrane region spans residues 1-89 (MAETTKLQLF…EEFLEETLGP (89 aa)). The 79-residue stretch at 13–91 (ASEDGESVGH…FLEETLGPPD (79 aa)) folds into the GST N-terminal domain. The short motif at 23-26 (CPSC) is the G-site element. An intrachain disulfide couples Cys-23 to Cys-26. Residues 25–45 (SCQRLFMVLLLKGVPFTLTTV) form a helical membrane-spanning segment. A GST C-terminal domain is found at 69–236 (DGDVKTDTLQ…LAAYQPAVHP (168 aa)). Ser-160 bears the Phosphoserine mark.

It belongs to the chloride channel CLIC family. In terms of assembly, associated with the C-terminal of MAPK15.

The protein resides in the nucleus. The protein localises to the membrane. Its subcellular location is the cell membrane. It is found in the cytoplasm. It localises to the secreted. The protein resides in the extracellular space. The protein localises to the extracellular matrix. The catalysed reaction is chloride(in) = chloride(out). Functionally, in the soluble state, catalyzes glutaredoxin-like thiol disulfide exchange reactions with reduced glutathione as electron donor. Reduced in a glutathione-dependent way and secreted into the extracellular matrix where it activates TGM2 and promotes blood vessel growth during tissue remodeling as occurs in tumorigenesis. Can reduce specific cysteines in TGM2 and regulate cofactor binding. Can insert into membranes and form outwardly rectifying chloride ion channels. May participate in cellular growth control. The sequence is that of Chloride intracellular channel protein 3 from Mus musculus (Mouse).